Here is a 122-residue protein sequence, read N- to C-terminus: Large ribosomal subunit protein bL12 (122 aa).

It belongs to the bacterial ribosomal protein bL12 family. In terms of assembly, homodimer. Part of the ribosomal stalk of the 50S ribosomal subunit. Forms a multimeric L10(L12)X complex, where L10 forms an elongated spine to which 2 to 4 L12 dimers bind in a sequential fashion. Binds GTP-bound translation factors.

Its function is as follows. Forms part of the ribosomal stalk which helps the ribosome interact with GTP-bound translation factors. Is thus essential for accurate translation. The protein is Large ribosomal subunit protein bL12 of Fusobacterium nucleatum subsp. nucleatum (strain ATCC 25586 / DSM 15643 / BCRC 10681 / CIP 101130 / JCM 8532 / KCTC 2640 / LMG 13131 / VPI 4355).